Here is a 96-residue protein sequence, read N- to C-terminus: uncharacterized protein (96 aa).

The signal sequence occupies residues 1–21 (MLASVLILGAIAVGSAIPTIA).

This is an uncharacterized protein from Archaeoglobus fulgidus (strain ATCC 49558 / DSM 4304 / JCM 9628 / NBRC 100126 / VC-16).